Reading from the N-terminus, the 467-residue chain is Fumarate hydratase class II (467 aa).

Residues 98–100 (SGT), R126, 129–132 (HPND), 139–141 (SSN), and T187 contribute to the substrate site. Residue H188 is the Proton donor/acceptor of the active site. S318 is an active-site residue. Substrate-binding positions include S319 and 324–326 (KVN).

It belongs to the class-II fumarase/aspartase family. Fumarase subfamily. In terms of assembly, homotetramer.

The protein resides in the cytoplasm. It catalyses the reaction (S)-malate = fumarate + H2O. It participates in carbohydrate metabolism; tricarboxylic acid cycle; (S)-malate from fumarate: step 1/1. Inhibited by ATP, citrate and S-2,3-dicarboxyaziridine. Involved in the TCA cycle. FumC seems to be a backup enzyme for FumA under conditions of iron limitation and oxidative stress. Catalyzes the stereospecific interconversion of fumarate to L-malate. In Escherichia coli (strain K12), this protein is Fumarate hydratase class II.